The sequence spans 384 residues: FAD-dependent urate hydroxylase (384 aa).

FAD is bound by residues glycine 11, 30–31 (EA), serine 43, and valine 125. Substrate is bound by residues asparagine 178, arginine 204, and 216 to 218 (YFF). Residues aspartate 285 and 295–299 (GQGGC) contribute to the FAD site.

The protein belongs to the FAD-dependent urate hydroxylase family. As to quaternary structure, monomer. Requires FAD as cofactor.

It catalyses the reaction urate + NADH + O2 + H(+) = 5-hydroxyisourate + NAD(+) + H2O. It functions in the pathway purine metabolism; urate degradation. Catalyzes the hydroxylation of urate to 5-hydroxyisourate (HIU). The sequence is that of FAD-dependent urate hydroxylase from Klebsiella pneumoniae subsp. pneumoniae (strain ATCC 700721 / MGH 78578).